The chain runs to 202 residues: Succinate dehydrogenase cytochrome b558 subunit (202 aa).

Helical transmembrane passes span leucine 12–valine 31, isoleucine 60–phenylalanine 79, asparagine 93–histidine 113, isoleucine 135–histidine 155, and isoleucine 178–lysine 196. Heme-binding residues include histidine 28, histidine 70, histidine 113, and histidine 155.

The protein belongs to the cytochrome b558 family. Part of an enzyme complex containing three subunits: a flavoprotein, an iron-sulfur protein and cytochrome b-558.

It is found in the cell membrane. The protein operates within carbohydrate metabolism; tricarboxylic acid cycle. Functionally, di-heme cytochrome of the succinate dehydrogenase complex. This Bacillus subtilis (strain 168) protein is Succinate dehydrogenase cytochrome b558 subunit (sdhC).